We begin with the raw amino-acid sequence, 207 residues long: Porin MspD (207 aa).

The signal sequence occupies residues 1–24 (MRYLVMMFALLVSVTLVSPRPANA).

It belongs to the mycobacterial porin (TC 1.B.24) family. Octamers. Probably forms a goblet with the wide end on the exterior of the outer membrane and a central channel. It is not known if mixed oligomers of MspD with other Msp subunits form in vivo.

The protein resides in the cell outer membrane. Its subcellular location is the secreted. It is found in the cell wall. Functionally, a backup porin induced when MspA, the major porin, is deleted. It probably forms a water-filled channel which favors the permeation of cations. There are about 2400 porins in wild-type, 800 in an mspA deletion and 150 in a double mspA-mspC deletion. This Mycolicibacterium smegmatis (strain ATCC 700084 / mc(2)155) (Mycobacterium smegmatis) protein is Porin MspD (mspD).